The chain runs to 626 residues: Zinc finger protein 471 (626 aa).

Positions 14-85 constitute a KRAB domain; sequence VTFKDVAIDF…TSEMTRSPFS (72 aa). C2H2-type zinc fingers lie at residues 206–228, 234–256, 262–284, 290–312, 318–340, 346–369, 375–397, 403–425, 431–453, 459–481, 487–509, 515–537, 543–565, 571–593, and 599–621; these read FKCNECDKTFTHSSSLTVHFRIH, YACEECGKAFKQRQHLAQHHRTH, FECKECRKAFKQSEHLIQHQRIH, YKCKECRKAFRQPAHLAQHQRIH, YECKECGKAFSDGSSFARHQRCH, YECIECGKAFRYNTSFIRHWRSYH, FNCIDCGKAFSVHIGLILHRRIH, YKCGVCGKTFSSGSSRTVHQRIH, YECDICGKDFSHHASLTQHQRVH, YECKECGKAFRQNVHLVSHLRIH, YECKECGKAFRISSQLATHQRIH, YECIECGNAFKQRSHLAQHQKTH, YECNECGKAFSQTSNLTQHQRIH, YKCTECGKAFSDSSSCAQHQRLH, and YQCFECGKAFRRKLSLICHQRSH.

Belongs to the krueppel C2H2-type zinc-finger protein family.

It localises to the nucleus. Its function is as follows. May be involved in transcriptional regulation. This chain is Zinc finger protein 471 (ZNF471), found in Homo sapiens (Human).